The primary structure comprises 222 residues: Type II restriction enzyme MjaI (222 aa).

It carries out the reaction Endonucleolytic cleavage of DNA to give specific double-stranded fragments with terminal 5'-phosphates.. Functionally, a P subtype restriction enzyme that recognizes the double-stranded sequence 5'-CTAG-3'; the cleavage site is unknown. The protein is Type II restriction enzyme MjaI (mjaIR) of Methanocaldococcus jannaschii (strain ATCC 43067 / DSM 2661 / JAL-1 / JCM 10045 / NBRC 100440) (Methanococcus jannaschii).